The chain runs to 391 residues: S-adenosylmethionine synthase (391 aa).

An ATP-binding site is contributed by H14. Position 16 (D16) interacts with Mg(2+). E42 contacts K(+). L-methionine is bound by residues E55 and Q98. Residues 98 to 108 form a flexible loop region; that stretch reads QSADIAMGVDE. Residues 172–174, 238–239, D247, 253–254, A270, and K274 each bind ATP; these read DGK, RF, and RK. D247 serves as a coordination point for L-methionine. K278 contacts L-methionine.

This sequence belongs to the AdoMet synthase family. As to quaternary structure, homotetramer; dimer of dimers. The cofactor is Mg(2+). K(+) is required as a cofactor.

It is found in the cytoplasm. It catalyses the reaction L-methionine + ATP + H2O = S-adenosyl-L-methionine + phosphate + diphosphate. It participates in amino-acid biosynthesis; S-adenosyl-L-methionine biosynthesis; S-adenosyl-L-methionine from L-methionine: step 1/1. In terms of biological role, catalyzes the formation of S-adenosylmethionine (AdoMet) from methionine and ATP. The overall synthetic reaction is composed of two sequential steps, AdoMet formation and the subsequent tripolyphosphate hydrolysis which occurs prior to release of AdoMet from the enzyme. The polypeptide is S-adenosylmethionine synthase (Clostridium acetobutylicum (strain ATCC 824 / DSM 792 / JCM 1419 / IAM 19013 / LMG 5710 / NBRC 13948 / NRRL B-527 / VKM B-1787 / 2291 / W)).